The following is a 574-amino-acid chain: Iron hydrogenase 1 (574 aa).

A 2Fe-2S ferredoxin-type domain is found at 1 to 78 (MKTIIINGVQ…GMIINTNSDA (78 aa)). [2Fe-2S] cluster-binding residues include cysteine 34, cysteine 46, cysteine 49, and cysteine 62. The 40-residue stretch at 78 to 117 (AVNEKIKSRISQLLDIHEFKCGPCNRRENCEFLKLVIKYK) folds into the 4Fe-4S His(Cys)3-ligated-type domain. [4Fe-4S] cluster is bound by residues histidine 94, cysteine 98, cysteine 101, cysteine 107, cysteine 147, cysteine 150, cysteine 153, cysteine 157, cysteine 190, cysteine 193, cysteine 196, cysteine 200, cysteine 300, cysteine 355, cysteine 499, and cysteine 503. 4Fe-4S ferredoxin-type domains lie at 138-167 (KSLT…YAMK) and 181-210 (DEKC…EKSH). Cysteine 503 contacts Fe(2+).

As to quaternary structure, monomer. The cofactor is [2Fe-2S] cluster. Requires [4Fe-4S] cluster as cofactor. Fe(2+) is required as a cofactor.

It carries out the reaction H2 + 2 oxidized [2Fe-2S]-[ferredoxin] = 2 reduced [2Fe-2S]-[ferredoxin] + 2 H(+). This chain is Iron hydrogenase 1, found in Clostridium pasteurianum.